We begin with the raw amino-acid sequence, 207 residues long: MLRGMKVVLTTGNPGKVRELKEGLAPLGWTLLTLADFALRMPKEEGATFLENALLKAAYVAKATGLPALADDSGLEVYALGGEPGVYSARYGGRATDRERNVYLLERMRHLKGEERKARFVAVLVLAYPDGHAEAYEGSVEGVILEAPRGEGGFGYDPLFYVPEAGKTFAEMGLEEKARYSHRGKALRALLEAYKDGPPPREVSKLE.

11–16 (TGNPGK) contributes to the substrate binding site. Asp-72 serves as the catalytic Proton acceptor. Asp-72 is a Mg(2+) binding site. Residues Ser-73, 154–157 (FGYD), Lys-177, and 182–183 (HR) contribute to the substrate site.

This sequence belongs to the HAM1 NTPase family. As to quaternary structure, homodimer. The cofactor is Mg(2+).

The enzyme catalyses XTP + H2O = XMP + diphosphate + H(+). It carries out the reaction dITP + H2O = dIMP + diphosphate + H(+). It catalyses the reaction ITP + H2O = IMP + diphosphate + H(+). Pyrophosphatase that catalyzes the hydrolysis of nucleoside triphosphates to their monophosphate derivatives, with a high preference for the non-canonical purine nucleotides XTP (xanthosine triphosphate), dITP (deoxyinosine triphosphate) and ITP. Seems to function as a house-cleaning enzyme that removes non-canonical purine nucleotides from the nucleotide pool, thus preventing their incorporation into DNA/RNA and avoiding chromosomal lesions. The chain is dITP/XTP pyrophosphatase from Thermus thermophilus (strain ATCC BAA-163 / DSM 7039 / HB27).